A 147-amino-acid chain; its full sequence is UPF0306 protein YhbP (147 aa).

It belongs to the UPF0306 family.

In Escherichia coli O157:H7 (strain EC4115 / EHEC), this protein is UPF0306 protein YhbP.